Here is a 492-residue protein sequence, read N- to C-terminus: Ketol-acid reductoisomerase (NADP(+)) (492 aa).

The KARI N-terminal Rossmann domain occupies 15–208; sequence AQLGKCRFMA…GAHRAGVLES (194 aa). NADP(+) is bound by residues 45–48, R68, R76, S78, and 108–110; these read CGAQ and DKQ. Residue H132 is part of the active site. NADP(+) is bound at residue G158. KARI C-terminal knotted domains are found at residues 209-344 and 345-485; these read SFVA…NSPE and YDGK…MTDM. Mg(2+) contacts are provided by D217, E221, E389, and E393. A substrate-binding site is contributed by S414.

Belongs to the ketol-acid reductoisomerase family. It depends on Mg(2+) as a cofactor.

It catalyses the reaction (2R)-2,3-dihydroxy-3-methylbutanoate + NADP(+) = (2S)-2-acetolactate + NADPH + H(+). The catalysed reaction is (2R,3R)-2,3-dihydroxy-3-methylpentanoate + NADP(+) = (S)-2-ethyl-2-hydroxy-3-oxobutanoate + NADPH + H(+). Its pathway is amino-acid biosynthesis; L-isoleucine biosynthesis; L-isoleucine from 2-oxobutanoate: step 2/4. The protein operates within amino-acid biosynthesis; L-valine biosynthesis; L-valine from pyruvate: step 2/4. Involved in the biosynthesis of branched-chain amino acids (BCAA). Catalyzes an alkyl-migration followed by a ketol-acid reduction of (S)-2-acetolactate (S2AL) to yield (R)-2,3-dihydroxy-isovalerate. In the isomerase reaction, S2AL is rearranged via a Mg-dependent methyl migration to produce 3-hydroxy-3-methyl-2-ketobutyrate (HMKB). In the reductase reaction, this 2-ketoacid undergoes a metal-dependent reduction by NADPH to yield (R)-2,3-dihydroxy-isovalerate. This Photorhabdus laumondii subsp. laumondii (strain DSM 15139 / CIP 105565 / TT01) (Photorhabdus luminescens subsp. laumondii) protein is Ketol-acid reductoisomerase (NADP(+)).